Here is a 216-residue protein sequence, read N- to C-terminus: 3-keto-L-gulonate-6-phosphate decarboxylase UlaD (216 aa).

Asp-11 lines the substrate pocket. Glu-33 and Asp-62 together coordinate Mg(2+). Arg-192 lines the substrate pocket.

The protein belongs to the HPS/KGPDC family. KGPDC subfamily. In terms of assembly, homodimer. Mg(2+) serves as cofactor.

The enzyme catalyses 3-dehydro-L-gulonate 6-phosphate + H(+) = L-xylulose 5-phosphate + CO2. It functions in the pathway cofactor degradation; L-ascorbate degradation; D-xylulose 5-phosphate from L-ascorbate: step 2/4. Catalyzes the decarboxylation of 3-keto-L-gulonate-6-P into L-xylulose-5-P. Is involved in the anaerobic L-ascorbate utilization. This chain is 3-keto-L-gulonate-6-phosphate decarboxylase UlaD, found in Escherichia coli O127:H6 (strain E2348/69 / EPEC).